Consider the following 775-residue polypeptide: Minichromosome maintenance protein 5 (775 aa).

Residues 1–22 (MSFDRPEIYSAPVLQGESPNDD) form a disordered region. In terms of domain architecture, MCM spans 366–573 (LYEILTNSIA…RDISIANHVI (208 aa)). 416–423 (GDPGTAKS) provides a ligand contact to ATP. An Arginine finger motif is present at residues 548 to 551 (SRFD).

This sequence belongs to the MCM family. Component of the MCM2-7 complex. The complex forms a toroidal hexameric ring with the proposed subunit order MCM2-MCM6-MCM4-MCM7-MCM3-MCM5; loaded onto DNA, forms a head-head double hexamer. Interacts with CSM1.

The protein localises to the nucleus. The enzyme catalyses ATP + H2O = ADP + phosphate + H(+). Its function is as follows. Acts as a component of the MCM2-7 complex (MCM complex) which is the putative replicative helicase essential for 'once per cell cycle' DNA replication initiation and elongation in eukaryotic cells. The active ATPase sites in the MCM2-7 ring are formed through the interaction surfaces of two neighboring subunits such that a critical structure of a conserved arginine finger motif is provided in trans relative to the ATP-binding site of the Walker A box of the adjacent subunit. The six ATPase active sites, however, are likely to contribute differentially to the complex helicase activity; specifically the MCM2-MCM5 association is proposed to be reversible and to mediate a open ring conformation which may facilitate DNA loading. Once loaded onto DNA, double hexamers can slide on dsDNA in the absence of ATPase activity. The polypeptide is Minichromosome maintenance protein 5 (MCM5) (Saccharomyces cerevisiae (strain ATCC 204508 / S288c) (Baker's yeast)).